The primary structure comprises 145 residues: Neuromedin-S (145 aa).

Positions Met-1–Gly-27 are cleaved as a signal peptide. 2 consecutive propeptides follow at residues Phe-28–Tyr-89 and Phe-92–Thr-117. At Asn-136 the chain carries Asparagine amide. The propeptide occupies Val-140–His-145.

This sequence belongs to the NmU family. Expressed by the skin glands.

The protein localises to the secreted. Its function is as follows. Stimulates uterine smooth muscle contraction. Synthetic peptide NmS-17 induces calcium mobilization in CHO cells transfected with either human FM-3/GPR66 (EC(50)=0.085 nM) or FM-4/TGR-1 (EC(50)=0.231 nM) NmU/NmS receptors. The protein is Neuromedin-S (nms) of Bombina orientalis (Oriental fire-bellied toad).